A 424-amino-acid polypeptide reads, in one-letter code: S-phase kinase-associated protein 2 (424 aa).

Residues 1 to 220 (MHRKHLQEIP…LSLEGLRLSD (220 aa)) are mediates interaction with hepatitis C virus non-structural protein NS5A. Positions 39-73 (SALEKEEPDSENIPQELLSNLGHPESPPRKRLKSK) are disordered. A Phosphoserine modification is found at serine 64. The Nuclear localization signal signature appears at 67 to 73 (RKRLKSK). Lysine 68 and lysine 71 each carry N6-acetyllysine; by p300/EP300. Phosphoserine is present on residues serine 72 and serine 75. The F-box domain maps to 94–140 (GVSWDSLPDELLLGIFSCLCLPELLKVSGVCKRWYRLASDESLWQTL). 10 LRR repeats span residues 151 to 176 (VTGR…PLAE), 177 to 204 (HFSP…ILSQ), 210 to 234 (NLSL…NLVR), 235 to 257 (LNLS…SCSR), 258 to 284 (LDEL…VSET), 286 to 308 (TQLN…LVRR), 309 to 330 (CPNL…CFQE), 334 to 356 (LNYL…LLEL), 359 to 378 (IPTL…TLQL), and 380 to 401 (KEAL…RPTI). Serine 179 bears the Phosphoserine mark. A mediates interaction with IFI27 region spans residues 402-424 (GNKKNQEIWGIKCRLTLQKPSCL).

Part of a SCF(SKP2) complex consisting of CUL1, RBX1, SKP1 and SKP2. Component of a SCF(SKP2)-like complex containing CUL1, SKP1, TRIM21 and SKP2. Interacts directly with CUL1 and SKP1. Interacts with CKS1. Interacts with ASB2 which is the substrate-recognition component of a probable ECS E3 ubiquitin-protein ligase complex; ASB2 is likely to bridge the formation of dimeric E3-ubiquitin-protein ligase complexes composed of an ECS complex and an SCF(SKP2) complex. Interacts with the cyclin-A-CDK2 complex. Interacts with ORC1, phosphorylated CDT1, phosphorylated RBL2, ELF4, phosphorylated RAG2, FOXO1, UBP43, MYC, TOB1, TAL1 and KMT2A/MLL1. Interacts with TRIM21. Interacts with cyclin-E. Interacts with IFI27; promotes the ubiquitin-mediated proteasomal degradation of hepatitis C virus/HCV non-structural protein NS5A. Interacts with CARM1. In terms of assembly, (Microbial infection) Interacts with hepatitis C virus/HCV non-structural protein NS5A; promotes the ubiquitin-mediated proteasomal degradation of NS5A. Phosphorylated on serine and threonine resudues in response to DNA damage, promoting 'Lys-63'-linked ubiquitination of NBN. In terms of processing, ubiquitinated by the APC/C complex, leading to its degradation by the proteasome. Deubiquitinated by USP13. Post-translationally, acetylation at Lys-68 and Lys-71 increases stability through impairment of APC/C-mediated proteolysis and promotes cytoplasmic retention. Deacetylated by SIRT3.

The protein resides in the cytoplasm. Its subcellular location is the nucleus. The protein operates within protein modification; protein ubiquitination. Substrate recognition component of a SCF (SKP1-CUL1-F-box protein) E3 ubiquitin-protein ligase complex which mediates the ubiquitination and subsequent proteasomal degradation of target proteins involved in cell cycle progression, signal transduction and transcription. Specifically recognizes phosphorylated CDKN1B/p27kip and is involved in regulation of G1/S transition. Degradation of CDKN1B/p27kip also requires CKS1. Recognizes target proteins ORC1, CDT1, RBL2, KMT2A/MLL1, CDK9, RAG2, NBN, FOXO1, UBP43, YTHDF2, and probably MYC, TOB1 and TAL1. Degradation of TAL1 also requires STUB1. Recognizes CDKN1A in association with CCNE1 or CCNE2 and CDK2. Promotes ubiquitination and destruction of CDH1 in a CK1-dependent manner, thereby regulating cell migration. Following phosphorylation in response to DNA damage, mediates 'Lys-63'-linked ubiquitination of NBN, promoting ATM recruitment to DNA damage sites and DNA repair via homologous recombination. In terms of biological role, through the ubiquitin-mediated proteasomal degradation of hepatitis C virus non-structural protein 5A, has an antiviral activity towards that virus. The protein is S-phase kinase-associated protein 2 (SKP2) of Homo sapiens (Human).